The sequence spans 122 residues: Large ribosomal subunit protein bL12 (122 aa).

The protein belongs to the bacterial ribosomal protein bL12 family. Homodimer. Part of the ribosomal stalk of the 50S ribosomal subunit. Forms a multimeric L10(L12)X complex, where L10 forms an elongated spine to which 2 to 4 L12 dimers bind in a sequential fashion. Binds GTP-bound translation factors.

Its function is as follows. Forms part of the ribosomal stalk which helps the ribosome interact with GTP-bound translation factors. Is thus essential for accurate translation. The sequence is that of Large ribosomal subunit protein bL12 from Vibrio campbellii (strain ATCC BAA-1116).